The primary structure comprises 296 residues: uncharacterized protein (296 aa).

Residues 129–170 are a coiled coil; it reads VKELKDLIRTVADEHMKMKREHEAAMKELTLLINNQKQQQQQ. The tract at residues 165 to 187 is disordered; the sequence is KQQQQQPVPMPRNSTATRPKNLA.

This is an uncharacterized protein from Ostreid herpesvirus 1 (isolate France) (OsHV-1).